The following is a 1004-amino-acid chain: Presequence protease, mitochondrial (1004 aa).

A mitochondrion-targeting transit peptide spans 1-34 (MLRNAAAGARKAVTELSQFPKPGEKLHGFTLVRS). A Zn(2+)-binding site is contributed by H84. The active-site Proton acceptor is E87. H88 contacts Zn(2+). The active site involves E160. E188 contributes to the Zn(2+) binding site.

It belongs to the peptidase M16 family. PreP subfamily. As to quaternary structure, monomer and homodimer; homodimerization is induced by binding of the substrate. Requires Zn(2+) as cofactor.

It localises to the mitochondrion intermembrane space. It is found in the mitochondrion matrix. In terms of biological role, degrades mitochondrial transit peptides after their cleavage in the intermembrane space or in the matrix, and presequence peptides; clearance of these peptides is required to keep the presequence processing machinery running. Preferentially cleaves the N-terminal side of paired basic amino acid residues. Also degrades other unstructured peptides. May function as an ATP-dependent peptidase as opposed to a metalloendopeptidase. This is Presequence protease, mitochondrial (CYM1) from Gibberella zeae (strain ATCC MYA-4620 / CBS 123657 / FGSC 9075 / NRRL 31084 / PH-1) (Wheat head blight fungus).